A 104-amino-acid polypeptide reads, in one-letter code: SOSS complex subunit C (104 aa).

Ala-2 is subject to N-acetylalanine. The residue at position 50 (Ser-50) is a Phosphoserine.

Belongs to the SOSS-C family. As to quaternary structure, component of the SOSS complex, composed of SOSS-B (SOSS-B1/NABP2 or SOSS-B2/NABP1), SOSS-A/INTS3 and SOSS-C/INIP. SOSS complexes containing SOSS-B1/NABP2 are more abundant than complexes containing SOSS-B2/NABP1. Interacts with INTS3; the interaction is direct.

The protein resides in the nucleus. Component of the SOSS complex, a multiprotein complex that functions downstream of the MRN complex to promote DNA repair and G2/M checkpoint. The SOSS complex associates with single-stranded DNA at DNA lesions and influences diverse endpoints in the cellular DNA damage response including cell-cycle checkpoint activation, recombinational repair and maintenance of genomic stability. Required for efficient homologous recombination-dependent repair of double-strand breaks (DSBs) and ATM-dependent signaling pathways. This chain is SOSS complex subunit C (INIP), found in Homo sapiens (Human).